The following is a 182-amino-acid chain: Large ribosomal subunit protein uL6 (182 aa).

It belongs to the universal ribosomal protein uL6 family. In terms of assembly, part of the 50S ribosomal subunit.

This protein binds to the 23S rRNA, and is important in its secondary structure. It is located near the subunit interface in the base of the L7/L12 stalk, and near the tRNA binding site of the peptidyltransferase center. The protein is Large ribosomal subunit protein uL6 of Methanococcus maripaludis (strain C7 / ATCC BAA-1331).